The sequence spans 724 residues: Probable protein phosphatase 2C 62 (724 aa).

Residues 357 to 385 (DELISTSEATRHSVDEIAQKPIIDTSEKN) are disordered. The span at 365-374 (ATRHSVDEIA) shows a compositional bias: basic and acidic residues. The PPM-type phosphatase domain occupies 482-719 (DSGFASLQSP…DAVTVIISFV (238 aa)). Aspartate 514, glycine 515, aspartate 643, and aspartate 710 together coordinate Mn(2+).

The protein belongs to the PP2C family. Mg(2+) is required as a cofactor. Mn(2+) serves as cofactor.

The catalysed reaction is O-phospho-L-seryl-[protein] + H2O = L-seryl-[protein] + phosphate. It carries out the reaction O-phospho-L-threonyl-[protein] + H2O = L-threonyl-[protein] + phosphate. The chain is Probable protein phosphatase 2C 62 from Arabidopsis thaliana (Mouse-ear cress).